Here is a 208-residue protein sequence, read N- to C-terminus: Putative archaetidylserine decarboxylase proenzyme (208 aa).

The active-site Schiff-base intermediate with substrate; via pyruvic acid is the Ser-171. Ser-171 carries the post-translational modification Pyruvic acid (Ser); by autocatalysis.

The protein belongs to the phosphatidylserine decarboxylase family. PSD-A subfamily. Heterodimer of a large membrane-associated beta subunit and a small pyruvoyl-containing alpha subunit. It depends on pyruvate as a cofactor. In terms of processing, is synthesized initially as an inactive proenzyme. Formation of the active enzyme involves a self-maturation process in which the active site pyruvoyl group is generated from an internal serine residue via an autocatalytic post-translational modification. Two non-identical subunits are generated from the proenzyme in this reaction, and the pyruvate is formed at the N-terminus of the alpha chain, which is derived from the carboxyl end of the proenzyme. The post-translation cleavage follows an unusual pathway, termed non-hydrolytic serinolysis, in which the side chain hydroxyl group of the serine supplies its oxygen atom to form the C-terminus of the beta chain, while the remainder of the serine residue undergoes an oxidative deamination to produce ammonia and the pyruvoyl prosthetic group on the alpha chain.

Its subcellular location is the cell membrane. The enzyme catalyses archaetidylserine + H(+) = archaetidylethanolamine + CO2. Catalyzes the formation of archaetidylethanolamine (PtdEtn) from archaetidylserine (PtdSer). The polypeptide is Putative archaetidylserine decarboxylase proenzyme (Methanococcoides burtonii (strain DSM 6242 / NBRC 107633 / OCM 468 / ACE-M)).